The sequence spans 2188 residues: Phenolphthiocerol/phthiocerol polyketide synthase subunit C (2188 aa).

The 429-residue stretch at 34–462 folds into the Ketosynthase family 3 (KS3) domain; the sequence is SEPIAVIGMG…GTNAHVVIEQ (429 aa). Active-site for beta-ketoacyl synthase activity residues include cysteine 210, histidine 345, and histidine 384. The acyltransferase stretch occupies residues 572-890; that stretch reads VFVYSGRGSQ…NLNTTHTTHP (319 aa). Serine 660 serves as the catalytic For malonyltransferase activity. The interval 928–1050 is N-terminal hotdog fold; it reads HPLLGVGVTD…ATVARAEPLA (123 aa). The dehydratase stretch occupies residues 928 to 1093; sequence HPLLGVGVTD…QQHGPAFQGI (166 aa). A PKS/mFAS DH domain is found at 928–1223; the sequence is HPLLGVGVTD…MAVLGSGSGA (296 aa). Histidine 959 functions as the Proton acceptor; for dehydratase activity in the catalytic mechanism. The C-terminal hotdog fold stretch occupies residues 1067–1223; the sequence is EDQLDPDDLY…MAVLGSGSGA (157 aa). Aspartate 1129 functions as the Proton donor; for dehydratase activity in the catalytic mechanism. The enoylreductase stretch occupies residues 1467–1778; it reads GRLDALNVHE…SGKHTGKIVI (312 aa). The interval 1802-1981 is beta-ketoacyl reductase; the sequence is GGYLIVGGMG…GINWGPWADV (180 aa). 1803 to 1848 is an NADP(+) binding site; sequence GYLIVGGMGGLGFVVARWLAEQGAGLIVLNGRSAPSDEVAAAIAEL. In terms of domain architecture, Carrier spans 2069–2145; it reads ERPGHLASAI…DLATALCERM (77 aa). The residue at position 2105 (serine 2105) is an O-(pantetheine 4'-phosphoryl)serine.

In terms of assembly, homodimer. NADP(+) serves as cofactor. It depends on pantetheine 4'-phosphate as a cofactor.

The enzyme catalyses icosanoyl-[(phenol)carboxyphthiodiolenone synthase] + 2 (S)-methylmalonyl-CoA + 3 malonyl-CoA + 5 NADPH + 10 H(+) = C32-carboxyphthiodiolenone-[(phenol)carboxyphthiodiolenone synthase] + 5 CO2 + 5 NADP(+) + 5 CoA + 2 H2O. It catalyses the reaction docosanoyl-[(phenol)carboxyphthiodiolenone synthase] + 2 (S)-methylmalonyl-CoA + 3 malonyl-CoA + 5 NADPH + 10 H(+) = C34-carboxyphthiodiolenone-[(phenol)carboxyphthiodiolenone synthase] + 5 CO2 + 5 NADP(+) + 5 CoA + 2 H2O. It carries out the reaction 17-(4-hydroxyphenyl)heptadecanoyl-[(phenol)carboxyphthiodiolenone synthase] + 2 (S)-methylmalonyl-CoA + 3 malonyl-CoA + 5 NADPH + 10 H(+) = C35-(phenol)carboxyphthiodiolenone-[(phenol)carboxyphthiodiolenone synthase] + 5 CO2 + 5 NADP(+) + 5 CoA + 2 H2O. The catalysed reaction is 19-(4-hydroxyphenyl)nonadecanoyl-[(phenol)carboxyphthiodiolenone synthase] + 2 (S)-methylmalonyl-CoA + 3 malonyl-CoA + 5 NADPH + 10 H(+) = C37-(phenol)carboxyphthiodiolenone-[(phenol)carboxyphthiodiolenone synthase] + 5 CO2 + 5 NADP(+) + 5 CoA + 2 H2O. It participates in lipid metabolism; fatty acid biosynthesis. In terms of biological role, part of the PpsABCDE complex involved in the biosynthesis of the lipid core common to phthiocerols and phenolphthiocerols by successive additions of malonyl-CoA or methylmalonyl-CoA extender units. PpsA can accept as substrate the activated forms of either icosanoyl (C20), docosanoyl (C22) or lignoceroyl (C24) groups from FadD26, or a (4-hydroxyphenyl)-C17 or (4-hydroxyphenyl)-C19 fatty acyl from FadD29. PpsA initiates the biosynthesis and extends its substrate using a malonyl-CoA extender unit. The PpsB and PpsC proteins add the second and third malonyl-CoA extender units. PpsD adds an (R)-methylmalonyl unit and PpsE adds a second (R)-methylmalonyl unit. The incorporation of the methylmalonyl units results in formation of two branched methyl groups in the elongated product. The protein is Phenolphthiocerol/phthiocerol polyketide synthase subunit C (ppsC) of Mycobacterium bovis (strain ATCC BAA-935 / AF2122/97).